Reading from the N-terminus, the 295-residue chain is Ankyrin repeat and SOCS box protein 17 (295 aa).

One copy of the ANK repeat lies at 146–176; the sequence is SGITPLFYVAQTRQSNIFKILLQYGILEREK. In terms of domain architecture, SOCS box spans 232 to 295; that stretch reads LGRHPIISNW…RLQNYLNLEI (64 aa).

The protein belongs to the ankyrin SOCS box (ASB) family. Specifically expressed in testis. Not detected in other tissues tested.

Its pathway is protein modification; protein ubiquitination. May be a substrate-recognition component of a SCF-like ECS (Elongin-Cullin-SOCS-box protein) E3 ubiquitin-protein ligase complex which mediates the ubiquitination and subsequent proteasomal degradation of target proteins. The sequence is that of Ankyrin repeat and SOCS box protein 17 (ASB17) from Homo sapiens (Human).